A 445-amino-acid chain; its full sequence is Chromosome partition protein MukF (445 aa).

Residues L213 to I241 form a leucine-zipper region.

It belongs to the MukF family. As to quaternary structure, interacts, and probably forms a ternary complex, with MukE and MukB via its C-terminal region. The complex formation is stimulated by calcium or magnesium. It is required for an interaction between MukE and MukB.

The protein localises to the cytoplasm. Its subcellular location is the nucleoid. Involved in chromosome condensation, segregation and cell cycle progression. May participate in facilitating chromosome segregation by condensation DNA from both sides of a centrally located replisome during cell division. Not required for mini-F plasmid partitioning. Probably acts via its interaction with MukB and MukE. Overexpression results in anucleate cells. It has a calcium binding activity. The protein is Chromosome partition protein MukF of Vibrio cholerae serotype O1 (strain ATCC 39315 / El Tor Inaba N16961).